The sequence spans 492 residues: Putative transporter SVOPL (492 aa).

Helical transmembrane passes span 48-68 (IALFLIMGSTGVVEAMEIMLI), 86-106 (VALVTTMVFFGYMVFSILFGL), 121-141 (FLWGAYFSLLTSFAPSYIWFV), 179-199 (VFWLAGSLLIIGLASVIIPTI), 203-223 (WLIRVASIPGIILIVAFKFIP), 281-301 (TLQIWVIWLGISFAYYGVILA), 348-368 (IISTIGEIALNPLNILGINFL), 383-403 (LFFLLLNICTSSAGLIGFLFM), 429-449 (ALGMGTSGSLCRIGAMVAPFI), and 458-478 (ILGALCLFSSVCVVCAISAFT).

It belongs to the major facilitator superfamily.

The protein resides in the membrane. The sequence is that of Putative transporter SVOPL (SVOPL) from Homo sapiens (Human).